A 475-amino-acid polypeptide reads, in one-letter code: Ribosomal RNA small subunit methyltransferase F (475 aa).

S-adenosyl-L-methionine is bound by residues A125 to K131, E149, D176, and D194. The active-site Nucleophile is the C247.

This sequence belongs to the class I-like SAM-binding methyltransferase superfamily. RsmB/NOP family.

It localises to the cytoplasm. The enzyme catalyses cytidine(1407) in 16S rRNA + S-adenosyl-L-methionine = 5-methylcytidine(1407) in 16S rRNA + S-adenosyl-L-homocysteine + H(+). Its function is as follows. Specifically methylates the cytosine at position 1407 (m5C1407) of 16S rRNA. The polypeptide is Ribosomal RNA small subunit methyltransferase F (Aeromonas hydrophila subsp. hydrophila (strain ATCC 7966 / DSM 30187 / BCRC 13018 / CCUG 14551 / JCM 1027 / KCTC 2358 / NCIMB 9240 / NCTC 8049)).